The primary structure comprises 187 residues: UPF0301 protein YqgE (187 aa).

Belongs to the UPF0301 (AlgH) family.

This chain is UPF0301 protein YqgE, found in Escherichia coli O127:H6 (strain E2348/69 / EPEC).